The chain runs to 235 residues: Pyridoxine 5'-phosphate synthase (235 aa).

Asparagine 6 provides a ligand contact to 3-amino-2-oxopropyl phosphate. 8-9 (DH) is a 1-deoxy-D-xylulose 5-phosphate binding site. 3-amino-2-oxopropyl phosphate is bound at residue arginine 17. The Proton acceptor role is filled by histidine 42. The 1-deoxy-D-xylulose 5-phosphate site is built by arginine 44 and histidine 49. Glutamate 69 acts as the Proton acceptor in catalysis. Threonine 99 contacts 1-deoxy-D-xylulose 5-phosphate. Catalysis depends on histidine 189, which acts as the Proton donor. 3-amino-2-oxopropyl phosphate is bound by residues glycine 190 and 211–212 (GH).

Belongs to the PNP synthase family. Homooctamer; tetramer of dimers.

It localises to the cytoplasm. The enzyme catalyses 3-amino-2-oxopropyl phosphate + 1-deoxy-D-xylulose 5-phosphate = pyridoxine 5'-phosphate + phosphate + 2 H2O + H(+). It functions in the pathway cofactor biosynthesis; pyridoxine 5'-phosphate biosynthesis; pyridoxine 5'-phosphate from D-erythrose 4-phosphate: step 5/5. Functionally, catalyzes the complicated ring closure reaction between the two acyclic compounds 1-deoxy-D-xylulose-5-phosphate (DXP) and 3-amino-2-oxopropyl phosphate (1-amino-acetone-3-phosphate or AAP) to form pyridoxine 5'-phosphate (PNP) and inorganic phosphate. This is Pyridoxine 5'-phosphate synthase from Chlorobium phaeovibrioides (strain DSM 265 / 1930) (Prosthecochloris vibrioformis (strain DSM 265)).